A 277-amino-acid chain; its full sequence is 2,3,4,5-tetrahydropyridine-2,6-dicarboxylate N-succinyltransferase (277 aa).

Positions 106 and 143 each coordinate substrate.

The protein belongs to the transferase hexapeptide repeat family. In terms of assembly, homotrimer.

It is found in the cytoplasm. The catalysed reaction is (S)-2,3,4,5-tetrahydrodipicolinate + succinyl-CoA + H2O = (S)-2-succinylamino-6-oxoheptanedioate + CoA. Its pathway is amino-acid biosynthesis; L-lysine biosynthesis via DAP pathway; LL-2,6-diaminopimelate from (S)-tetrahydrodipicolinate (succinylase route): step 1/3. This is 2,3,4,5-tetrahydropyridine-2,6-dicarboxylate N-succinyltransferase from Xylella fastidiosa (strain 9a5c).